A 212-amino-acid chain; its full sequence is Large ribosomal subunit protein uL3 (212 aa).

Gln-153 carries the post-translational modification N5-methylglutamine.

Belongs to the universal ribosomal protein uL3 family. Part of the 50S ribosomal subunit. Forms a cluster with proteins L14 and L19. Methylated by PrmB.

Functionally, one of the primary rRNA binding proteins, it binds directly near the 3'-end of the 23S rRNA, where it nucleates assembly of the 50S subunit. The chain is Large ribosomal subunit protein uL3 from Marinobacter nauticus (strain ATCC 700491 / DSM 11845 / VT8) (Marinobacter aquaeolei).